We begin with the raw amino-acid sequence, 886 residues long: DNA repair and recombination protein RAD54B (886 aa).

Positions 1–12 are enriched in polar residues; that stretch reads MRRSAAPSQVQG. Residues 1-95 form a disordered region; that stretch reads MRRSAAPSQV…ASKEITESKA (95 aa). A Phosphoserine modification is found at Ser-14. Polar residues predominate over residues 47-62; it reads AEQSQNDPGVCSSNPC. Composition is skewed to basic and acidic residues over residues 67–76 and 86–95; these read IPREVGDGTR and ASKEITESKA. One can recognise a Helicase ATP-binding domain in the interval 291 to 458; the sequence is GMRAVGKCGA…FALVDFVNPG (168 aa). ATP is bound at residue 304–311; sequence DEMGLGKT. Positions 409-412 match the DEGH box motif; sequence DEGH. The region spanning 627 to 788 is the Helicase C-terminal domain; that stretch reads KLLAVIHELR…HIQFSVEELK (162 aa).

It belongs to the SNF2/RAD54 helicase family. In terms of assembly, interacts with RAD51 through the NH2-terminal domain.

It localises to the nucleus. Functionally, involved in DNA repair and mitotic recombination. May play an active role in recombination processes in concert with other members of the RAD52 epistasis group. This chain is DNA repair and recombination protein RAD54B (Rad54b), found in Mus musculus (Mouse).